The following is a 90-amino-acid chain: Progonadoliberin-1 (90 aa).

An N-terminal signal peptide occupies residues 1-21 (MILKLMAGILLLTVCLEGCSS). Pyrrolidone carboxylic acid is present on Q22. A Glycine amide modification is found at G31.

It belongs to the GnRH family. In terms of processing, the precursor is cleaved by ACE, which removes the Gly-Lys-Arg peptide at the C-terminus, leading to mature hormone. The mature form of Gonadoliberin-1 is also cleaved and degraded by ACE.

It is found in the secreted. Functionally, stimulates the secretion of gonadotropins; it stimulates the secretion of both luteinizing and follicle-stimulating hormones. The sequence is that of Progonadoliberin-1 (Gnrh1) from Mus musculus (Mouse).